We begin with the raw amino-acid sequence, 285 residues long: Secreted RxLR effector protein 106 (285 aa).

An N-terminal signal peptide occupies residues 1 to 24; sequence MSVRYAGLLLAAVAVSAHINEVNS. Residues 42 to 54 carry the RxLR-dEER motif; that stretch reads RDLRSADNGNEER. N-linked (GlcNAc...) asparagine glycans are attached at residues N182 and N187. The segment covering 220–229 has biased composition (basic and acidic residues); it reads IEGDKEKKGG. Positions 220–262 are disordered; it reads IEGDKEKKGGPDYVEGTESRGKKRGQTEAPDLEPGLTPKQKRL. The short motif at 239 to 264 is the Bipartite nuclear localization signal element; it reads RGKKRGQTEAPDLEPGLTPKQKRLKR.

It belongs to the RxLR effector family. Interacts with host RCD1 and SRO1 transcription co-regulators.

Its subcellular location is the secreted. The protein localises to the host nucleus. Secreted effector that suppresses pathogen-associated molecular pattern (PAMP)-triggered immunity (PTI) in host plants. Binds to RCD1 and SRO1 transcription co-regulators to attenuate transcriptional activation of salicylic acid (SA)-induced defense genes and alters plant growth responses to light. Suppresses SA signal transduction but not SA levels. The polypeptide is Secreted RxLR effector protein 106 (Hyaloperonospora arabidopsidis (strain Emoy2) (Downy mildew agent)).